A 466-amino-acid chain; its full sequence is Argininosuccinate lyase 1 (466 aa).

This sequence belongs to the lyase 1 family. Argininosuccinate lyase subfamily.

Its subcellular location is the cytoplasm. The catalysed reaction is 2-(N(omega)-L-arginino)succinate = fumarate + L-arginine. Its pathway is amino-acid biosynthesis; L-arginine biosynthesis; L-arginine from L-ornithine and carbamoyl phosphate: step 3/3. The polypeptide is Argininosuccinate lyase 1 (Agrobacterium fabrum (strain C58 / ATCC 33970) (Agrobacterium tumefaciens (strain C58))).